The sequence spans 207 residues: Holliday junction branch migration complex subunit RuvA (207 aa).

A domain I region spans residues M1–L63. The tract at residues D64 to T142 is domain II. The tract at residues S143 to V153 is flexible linker. The domain III stretch occupies residues V153–R207.

This sequence belongs to the RuvA family. Homotetramer. Forms an RuvA(8)-RuvB(12)-Holliday junction (HJ) complex. HJ DNA is sandwiched between 2 RuvA tetramers; dsDNA enters through RuvA and exits via RuvB. An RuvB hexamer assembles on each DNA strand where it exits the tetramer. Each RuvB hexamer is contacted by two RuvA subunits (via domain III) on 2 adjacent RuvB subunits; this complex drives branch migration. In the full resolvosome a probable DNA-RuvA(4)-RuvB(12)-RuvC(2) complex forms which resolves the HJ.

The protein localises to the cytoplasm. The RuvA-RuvB-RuvC complex processes Holliday junction (HJ) DNA during genetic recombination and DNA repair, while the RuvA-RuvB complex plays an important role in the rescue of blocked DNA replication forks via replication fork reversal (RFR). RuvA specifically binds to HJ cruciform DNA, conferring on it an open structure. The RuvB hexamer acts as an ATP-dependent pump, pulling dsDNA into and through the RuvAB complex. HJ branch migration allows RuvC to scan DNA until it finds its consensus sequence, where it cleaves and resolves the cruciform DNA. In Bifidobacterium animalis subsp. lactis (strain AD011), this protein is Holliday junction branch migration complex subunit RuvA.